A 437-amino-acid chain; its full sequence is Phosphomethylpyrimidine synthase (437 aa).

Substrate contacts are provided by residues Asn69, Met98, Tyr127, His163, 185-187 (SRG), 226-229 (DACR), and Glu265. His269 contacts Zn(2+). Tyr292 lines the substrate pocket. Residue His333 coordinates Zn(2+). Residues Cys409, Cys412, and Cys416 each contribute to the [4Fe-4S] cluster site.

This sequence belongs to the ThiC family. [4Fe-4S] cluster serves as cofactor.

It carries out the reaction 5-amino-1-(5-phospho-beta-D-ribosyl)imidazole + S-adenosyl-L-methionine = 4-amino-2-methyl-5-(phosphooxymethyl)pyrimidine + CO + 5'-deoxyadenosine + formate + L-methionine + 3 H(+). It functions in the pathway cofactor biosynthesis; thiamine diphosphate biosynthesis. Its function is as follows. Catalyzes the synthesis of the hydroxymethylpyrimidine phosphate (HMP-P) moiety of thiamine from aminoimidazole ribotide (AIR) in a radical S-adenosyl-L-methionine (SAM)-dependent reaction. The chain is Phosphomethylpyrimidine synthase from Clostridium botulinum (strain ATCC 19397 / Type A).